We begin with the raw amino-acid sequence, 139 residues long: D-ribose pyranase (139 aa).

Histidine 20 (proton donor) is an active-site residue. Substrate-binding positions include aspartate 28, histidine 106, and 128 to 130 (YAN).

It belongs to the RbsD / FucU family. RbsD subfamily. Homodecamer.

It localises to the cytoplasm. It catalyses the reaction beta-D-ribopyranose = beta-D-ribofuranose. It functions in the pathway carbohydrate metabolism; D-ribose degradation; D-ribose 5-phosphate from beta-D-ribopyranose: step 1/2. Its function is as follows. Catalyzes the interconversion of beta-pyran and beta-furan forms of D-ribose. In Edwardsiella ictaluri (strain 93-146), this protein is D-ribose pyranase.